The following is a 983-amino-acid chain: Polyhomeotic-like protein 3 (983 aa).

Disordered regions lie at residues 1 to 34, 103 to 149, 225 to 283, 313 to 332, 339 to 410, 477 to 509, and 601 to 620; these read MDTE…MQQP, LSSG…SSTS, VLSS…TAVT, LHSP…QQQQ, LQNS…SQSP, PGQQ…STSP, and DECV…PAAI. Low complexity-rich tracts occupy residues 9 to 29 and 103 to 126; these read TSSV…TSSS and LSSG…SQTS. The span at 127–139 shows a compositional bias: polar residues; that stretch reads INLSTSPTPAQLI. The segment covering 140–149 has biased composition (low complexity); the sequence is SRSQASSSTS. The span at 225–257 shows a compositional bias: polar residues; sequence VLSSSQNGPPKSTSQTQSLTICHNKTTVTSSKI. A compositionally biased stretch (basic and acidic residues) spans 258–271; sequence SQRDPSPESNKKGE. Serine 263 and serine 272 each carry phosphoserine. Positions 274 to 283 are enriched in polar residues; that stretch reads SLESRSTAVT. Phosphoserine is present on serine 315. Over residues 365–383 the composition is skewed to polar residues; it reads SNAQSQHCSPIQSHPSPLT. The segment covering 384–398 has biased composition (low complexity); the sequence is VSPNQSQSAQQSVVV. Positions 477–489 are enriched in polar residues; that stretch reads PGQQIVSPSHQQY. Positions 490-506 are enriched in low complexity; that stretch reads SSLQSSPIPIASPPQMS. Phosphothreonine occurs at positions 609 and 614. Serine 616 bears the Phosphoserine mark. Residues lysine 691 and lysine 732 each participate in a glycyl lysine isopeptide (Lys-Gly) (interchain with G-Cter in SUMO2) cross-link. Residues 691 to 720 carry the HD1 motif; sequence KPPQAIVKPQILTHVIEGFVIQEGLEPFPV. A phosphoserine mark is found at serine 761 and serine 762. The FCS-type zinc-finger motif lies at 776-810; it reads EEMDSELLKCEFCGKMGYANEFLRSKRFCTMSCAK. Zn(2+) contacts are provided by cysteine 785, cysteine 788, cysteine 804, and cysteine 808. Residue lysine 810 forms a Glycyl lysine isopeptide (Lys-Gly) (interchain with G-Cter in SUMO2) linkage. 2 disordered regions span residues 827-847 and 864-889; these read RKPD…PDGA and EEDL…SERE. The region spanning 919–983 is the SAM domain; sequence WTVDDVWAFI…CARINSLKES (65 aa).

As to quaternary structure, component of a PRC1-like complex.

Its subcellular location is the nucleus. Component of a Polycomb group (PcG) multiprotein PRC1-like complex, a complex class required to maintain the transcriptionally repressive state of many genes, including Hox genes, throughout development. PcG PRC1 complex acts via chromatin remodeling and modification of histones; it mediates monoubiquitination of histone H2A 'Lys-119', rendering chromatin heritably changed in its expressibility. The polypeptide is Polyhomeotic-like protein 3 (PHC3) (Homo sapiens (Human)).